Reading from the N-terminus, the 127-residue chain is Holo-[acyl-carrier-protein] synthase (127 aa).

Mg(2+) contacts are provided by D9 and E58.

It belongs to the P-Pant transferase superfamily. AcpS family. Requires Mg(2+) as cofactor.

Its subcellular location is the cytoplasm. The catalysed reaction is apo-[ACP] + CoA = holo-[ACP] + adenosine 3',5'-bisphosphate + H(+). Its function is as follows. Transfers the 4'-phosphopantetheine moiety from coenzyme A to a Ser of acyl-carrier-protein. This is Holo-[acyl-carrier-protein] synthase from Shewanella sp. (strain W3-18-1).